The sequence spans 236 residues: MLKLEKITYLYDHLPMCFDLHIQPGERVAILGPSGAGKSTLLSLIAGFLAPTSGHMLLNNQDHTASPPAQRPVSMLFQENNLFAHLTVEQNIGLGLHPGLKLSGEQRLLLQHIAQQVGLESCLDRLPAQLSGGQRQRAALARCLVRSQPILLLDEPFSALDPALRNEMLQLVDQVCINRQLTLLMVSHNLDDAARIAQRTLLIVEGRIDYDGPTQALVDGSAAKASVLGIKSAVIS.

Positions 2–230 (LKLEKITYLY…SAAKASVLGI (229 aa)) constitute an ABC transporter domain. Position 32 to 39 (32 to 39 (GPSGAGKS)) interacts with ATP.

It belongs to the ABC transporter superfamily. Thiamine importer (TC 3.A.1.19.1) family. In terms of assembly, the complex is composed of two ATP-binding proteins (ThiQ), two transmembrane proteins (ThiP) and a solute-binding protein (ThiB).

Its subcellular location is the cell inner membrane. The catalysed reaction is thiamine(out) + ATP + H2O = thiamine(in) + ADP + phosphate + H(+). Part of the ABC transporter complex ThiBPQ involved in thiamine import. Responsible for energy coupling to the transport system. The protein is Thiamine import ATP-binding protein ThiQ of Yersinia pseudotuberculosis serotype I (strain IP32953).